Reading from the N-terminus, the 575-residue chain is MNRRFPVWAPQAAQVTLVVGQGRAELPLTRDENGWWALQQPWDGGPDLVDYGYLVDGKGPFADPRSLRQPRGVHELGREFDPARYAWGDDGWRGRDLTGAVIYELHVGTFTPEGTLDSAIRRLDHLVRLGVDAVELLPVNAFNGTHGWGYDGVLWYAVHEPYGGPEAYQRFVDACHARGLAVVQDVVYNHLGPSGNHLPDFGPYLGSGAANTWGDALNLDGPLSDEVRRYIIDNAVYWLRDMHADGLRLDAVHALRDARALHLLEELAARVDELAGELGRPLTLIAESDLNDPKLIRSRAAHGYGLDAQWDDDVHHAVHANVTGETVGYYADFGGLGALVKVFQRGWFHDGTWSSFRERHHGRPLDPDIPFRRLVAFAQDHDQVGNRAVGDRMSAQVGEGSLAAAAALVLLGPFTPMLFMGEEWGARTPWQFFTSHPEPELGEATARGRIAEFARMGWDPAVVPDPQDPATFARSHLDWSEPEREPHAGLLAFYTDLIALRRELPVDAPAREVDADEARGVFAFSRGPLRVTVALRPGPVGVPEHGGLVLAYGEVRAGAAGLHLDGPGAAIVRLE.

248–253 (RLDAVH) contributes to the substrate binding site. Asp-250 (nucleophile) is an active-site residue. Catalysis depends on Glu-287, which acts as the Proton donor. Residues 312-316 (DDVHH) and 381-386 (HDQVGN) each bind substrate.

The protein belongs to the glycosyl hydrolase 13 family.

It localises to the cytoplasm. The catalysed reaction is hydrolysis of (1-&gt;4)-alpha-D-glucosidic linkage in 4-alpha-D-[(1-&gt;4)-alpha-D-glucanosyl]n trehalose to yield trehalose and (1-&gt;4)-alpha-D-glucan.. It functions in the pathway glycan biosynthesis; trehalose biosynthesis. This chain is Malto-oligosyltrehalose trehalohydrolase (treZ), found in Arthrobacter ramosus.